The sequence spans 160 residues: Ribonuclease HI (160 aa).

The 144-residue stretch at 4 to 147 (TPNSVTLYTD…CDRLAVAAYQ (144 aa)) folds into the RNase H type-1 domain. 4 residues coordinate Mg(2+): Asp-13, Glu-52, Asp-74, and Asp-139.

Belongs to the RNase H family. In terms of assembly, monomer. The cofactor is Mg(2+).

Its subcellular location is the cytoplasm. The catalysed reaction is Endonucleolytic cleavage to 5'-phosphomonoester.. Endonuclease that specifically degrades the RNA of RNA-DNA hybrids. The protein is Ribonuclease HI (rnhA) of Synechocystis sp. (strain ATCC 27184 / PCC 6803 / Kazusa).